The following is a 163-amino-acid chain: SKP1-like protein 3 (163 aa).

An interaction with the F-box domain of F-box proteins region spans residues 105-163; that stretch reads LRAANYLNISGLLDLTCKAVADQMRGKTPAQMREHFNIKNDYTPEEEAEVRNENRWAFE.

Belongs to the SKP1 family. As to quaternary structure, part of a SCF (SKP1-cullin-F-box) protein ligase complex. Interacts with ADO3/FKF1 and At3g61590. Highly expressed in siliques.

The protein localises to the nucleus. Its pathway is protein modification; protein ubiquitination. In terms of biological role, involved in ubiquitination and subsequent proteasomal degradation of target proteins. Together with CUL1, RBX1 and a F-box protein, it forms a SCF E3 ubiquitin ligase complex. The functional specificity of this complex depends on the type of F-box protein. In the SCF complex, it serves as an adapter that links the F-box protein to CUL1. The chain is SKP1-like protein 3 (ASK3) from Arabidopsis thaliana (Mouse-ear cress).